Here is a 390-residue protein sequence, read N- to C-terminus: 5-hydroxytryptamine receptor 1B (390 aa).

The interval 1-21 (MEETGAQCAPPPPAGSQTGVS) is disordered. Residues 1–46 (MEETGAQCAPPPPAGSQTGVSQVNLSAAPSHNCSTEGYVYQDSVAL) lie on the Extracellular side of the membrane. Asparagine 24 and asparagine 32 each carry an N-linked (GlcNAc...) asparagine glycan. The chain crosses the membrane as a helical span at residues 47 to 72 (PWKVLLVVLLALITLATTLSNAFVIA). At 73–86 (TVYRTRKLHTPANY) the chain is on the cytoplasmic side. The helical transmembrane segment at 87–111 (LIASLAVTDLLVSILVMPISTMYVV) threads the bilayer. Over 112–119 (TGRWTLGQ) the chain is Extracellular. A helical membrane pass occupies residues 120 to 145 (VVCDFWLSSDITCCTASILHLCVIAL). Residues cysteine 122 and cysteine 199 are joined by a disulfide bond. Residues aspartate 129 and threonine 134 each contribute to the ergotamine site. Positions 146–148 (DRY) match the DRY motif; important for ligand-induced conformation changes and signaling motif. The Cytoplasmic segment spans residues 146–165 (DRYWAITDAVEYSAKRTPKR). The chain crosses the membrane as a helical span at residues 166–184 (AAVMIALVWVFSISISLPP). Topologically, residues 185–205 (FFWRQAKAEEEVLDCLVNTDH) are extracellular. Valine 201 contributes to the ergotamine binding site. Residues 206-229 (ILYTVYSTVGAFYFPTLLLIALYS) form a helical membrane-spanning segment. The Cytoplasmic segment spans residues 230–315 (RIYVEARSRI…AARERKATKT (86 aa)). The tract at residues 251 to 282 (LTRAQLMTDSPGSTSSVTSINSRAPDVPSESG) is disordered. Residues 255-272 (QLMTDSPGSTSSVTSINS) show a composition bias toward polar residues. The helical transmembrane segment at 316-337 (LGIILGAFIVCWLPFFIISLVM) threads the bilayer. The Extracellular segment spans residues 338-347 (PICKDACWFH). A helical membrane pass occupies residues 348–370 (LAIFDFFTWLGYLNSLINPIIYT). The NPxxY motif; important for ligand-induced conformation changes and signaling motif lies at 365-369 (NPIIY). Topologically, residues 371 to 390 (MSNEDFKQAFHKLIRFKCAS) are cytoplasmic. Residue cysteine 388 is the site of S-palmitoyl cysteine attachment.

Belongs to the G-protein coupled receptor 1 family. Homodimer. Heterodimer with HTR1D. Post-translationally, phosphorylated. Desensitization of the receptor may be mediated by its phosphorylation. In terms of processing, palmitoylated.

Its subcellular location is the cell membrane. G-protein coupled receptor for 5-hydroxytryptamine (serotonin). Also functions as a receptor for ergot alkaloid derivatives, various anxiolytic and antidepressant drugs and other psychoactive substances, such as lysergic acid diethylamide (LSD). Ligand binding causes a conformation change that triggers signaling via guanine nucleotide-binding proteins (G proteins) and modulates the activity of downstream effectors, such as adenylate cyclase. HTR1B is coupled to G(i)/G(o) G alpha proteins and mediates inhibitory neurotransmission by inhibiting adenylate cyclase activity. Arrestin family members inhibit signaling via G proteins and mediate activation of alternative signaling pathways. Regulates the release of 5-hydroxytryptamine, dopamine and acetylcholine in the brain, and thereby affects neural activity, nociceptive processing, pain perception, mood and behavior. Besides, plays a role in vasoconstriction of cerebral arteries. This chain is 5-hydroxytryptamine receptor 1B (HTR1B), found in Equus caballus (Horse).